The primary structure comprises 460 residues: tRNA-2-methylthio-N(6)-dimethylallyladenosine synthase (460 aa).

In terms of domain architecture, MTTase N-terminal spans 23-138; the sequence is RKVYVHTFGC…LPEMVARAER (116 aa). Residues C32, C68, C101, C176, C180, and C183 each coordinate [4Fe-4S] cluster. The Radical SAM core domain occupies 162–394; that stretch reads ARGRPTAFVT…QAAQRRIAAA (233 aa). A TRAM domain is found at 397–460; it reads AAELGKVVEV…GGSSLSGTPA (64 aa).

Belongs to the methylthiotransferase family. MiaB subfamily. As to quaternary structure, monomer. [4Fe-4S] cluster serves as cofactor.

Its subcellular location is the cytoplasm. It carries out the reaction N(6)-dimethylallyladenosine(37) in tRNA + (sulfur carrier)-SH + AH2 + 2 S-adenosyl-L-methionine = 2-methylsulfanyl-N(6)-dimethylallyladenosine(37) in tRNA + (sulfur carrier)-H + 5'-deoxyadenosine + L-methionine + A + S-adenosyl-L-homocysteine + 2 H(+). Its function is as follows. Catalyzes the methylthiolation of N6-(dimethylallyl)adenosine (i(6)A), leading to the formation of 2-methylthio-N6-(dimethylallyl)adenosine (ms(2)i(6)A) at position 37 in tRNAs that read codons beginning with uridine. This Anaeromyxobacter sp. (strain Fw109-5) protein is tRNA-2-methylthio-N(6)-dimethylallyladenosine synthase.